Consider the following 451-residue polypeptide: 3-carboxy-cis,cis-muconate cycloisomerase (451 aa).

It belongs to the class-II fumarase/aspartase family.

The catalysed reaction is 2-(carboxymethyl)-5-oxo-2,5-dihydro-2-furoate = 3-carboxy-cis,cis-muconate + H(+). Its function is as follows. Catalyzes an anti cycloisomerization. This chain is 3-carboxy-cis,cis-muconate cycloisomerase (pcaB), found in Bradyrhizobium diazoefficiens (strain JCM 10833 / BCRC 13528 / IAM 13628 / NBRC 14792 / USDA 110).